The chain runs to 148 residues: Snaclec 27 (148 aa).

The N-terminal stretch at 1–23 is a signal peptide; it reads WGDSSSSASACWSCFSLVSGIGA. 3 disulfides stabilise this stretch: Cys27–Cys38, Cys55–Cys144, and Cys121–Cys136. The 112-residue stretch at 34–145 folds into the C-type lectin domain; the sequence is HEGHCYKVFS…CSSTQQFVCK (112 aa).

Belongs to the snaclec family. In terms of assembly, heterodimer; disulfide-linked. In terms of tissue distribution, expressed by the venom gland.

It is found in the secreted. In terms of biological role, interferes with one step of hemostasis (modulation of platelet aggregation, or coagulation cascade, for example). The protein is Snaclec 27 of Echis ocellatus (Ocellated saw-scaled viper).